Reading from the N-terminus, the 435-residue chain is Monodehydroascorbate reductase 4, cytosolic (435 aa).

Residues 14–17, E41, R48, K53, I96, and 147–148 contribute to the FAD site; these read GGVA and RD. NAD(+) contacts are provided by residues 172–178, E196, R202, and G261; that span reads GGYIGLE. Position 174–178 (174–178) interacts with NADP(+); that stretch reads YIGLE. NADP(+)-binding residues include R202 and G261. D298 is a binding site for FAD. Residue 314-315 coordinates NAD(+); that stretch reads EH. 314–315 contacts NADP(+); sequence EH. V316 contributes to the FAD binding site. R320 contributes to the L-ascorbate binding site. Residue Y349 participates in FAD binding. Y349 is an NAD(+) binding site. Residue Y349 coordinates NADP(+). R351 is an L-ascorbate binding site.

It belongs to the FAD-dependent oxidoreductase family. It depends on FAD as a cofactor. As to expression, expressed in anthers.

The protein localises to the cytoplasm. It carries out the reaction 2 monodehydro-L-ascorbate radical + NADH + H(+) = 2 L-ascorbate + NAD(+). Catalyzes the conversion of monodehydroascorbate to ascorbate, oxidizing NADH in the process. Ascorbate is a major antioxidant against reactive oxygen species (ROS) and nitric oxide (NO). In Oryza sativa subsp. japonica (Rice), this protein is Monodehydroascorbate reductase 4, cytosolic.